Reading from the N-terminus, the 156-residue chain is 6,7-dimethyl-8-ribityllumazine synthase (156 aa).

5-amino-6-(D-ribitylamino)uracil-binding positions include F22, 57–59, and 81–83; these read AVE and SVI. 86 to 87 lines the (2S)-2-hydroxy-3-oxobutyl phosphate pocket; the sequence is GT. H89 functions as the Proton donor in the catalytic mechanism. 5-amino-6-(D-ribitylamino)uracil is bound at residue F114. R128 provides a ligand contact to (2S)-2-hydroxy-3-oxobutyl phosphate.

Belongs to the DMRL synthase family. As to quaternary structure, forms an icosahedral capsid composed of 60 subunits, arranged as a dodecamer of pentamers.

The enzyme catalyses (2S)-2-hydroxy-3-oxobutyl phosphate + 5-amino-6-(D-ribitylamino)uracil = 6,7-dimethyl-8-(1-D-ribityl)lumazine + phosphate + 2 H2O + H(+). The protein operates within cofactor biosynthesis; riboflavin biosynthesis; riboflavin from 2-hydroxy-3-oxobutyl phosphate and 5-amino-6-(D-ribitylamino)uracil: step 1/2. Catalyzes the formation of 6,7-dimethyl-8-ribityllumazine by condensation of 5-amino-6-(D-ribitylamino)uracil with 3,4-dihydroxy-2-butanone 4-phosphate. This is the penultimate step in the biosynthesis of riboflavin. The protein is 6,7-dimethyl-8-ribityllumazine synthase of Aliivibrio salmonicida (strain LFI1238) (Vibrio salmonicida (strain LFI1238)).